The primary structure comprises 411 residues: Metal-binding regulatory protein cuf1 (411 aa).

Residues 1–40 (MVVINNVKMACMKCIRGHRSSTCKHNDRELFPIRPKGRPI) constitute a DNA-binding region (copper-fist). 4 residues coordinate Zn(2+): Cys-11, Cys-14, Cys-23, and His-25. The segment at 63-92 (SRKKGSKCSTSSTTDLDSSSASNSSCSIPS) is disordered. The segment covering 69–92 (KCSTSSTTDLDSSSASNSSCSIPS) has biased composition (low complexity).

Its subcellular location is the cytoplasm. The protein localises to the nucleus. In terms of biological role, copper-sensing transcription factor that regulates iron uptake genes. Under copper starvation conditions activates the transcription of the copper transport genes, ctr4, ctr5 and ctr6. The protein is Metal-binding regulatory protein cuf1 (cuf1) of Schizosaccharomyces pombe (strain 972 / ATCC 24843) (Fission yeast).